A 233-amino-acid polypeptide reads, in one-letter code: NAD(P)H-hydrate epimerase (233 aa).

A YjeF N-terminal domain is found at 15–218 (SQQFDVELMS…KLQEKYNFIV (204 aa)). 67-71 (NNGGD) is a (6S)-NADPHX binding site. Asn68 and Asp128 together coordinate K(+). Residues 132 to 138 (GFSFKPP), Tyr143, and Asp161 contribute to the (6S)-NADPHX site. Residue Ser164 coordinates K(+).

Belongs to the NnrE/AIBP family. The cofactor is K(+).

It carries out the reaction (6R)-NADHX = (6S)-NADHX. It catalyses the reaction (6R)-NADPHX = (6S)-NADPHX. Its function is as follows. Catalyzes the epimerization of the S- and R-forms of NAD(P)HX, a damaged form of NAD(P)H that is a result of enzymatic or heat-dependent hydration. This is a prerequisite for the S-specific NAD(P)H-hydrate dehydratase to allow the repair of both epimers of NAD(P)HX. The polypeptide is NAD(P)H-hydrate epimerase (Paramecium tetraurelia).